A 252-amino-acid polypeptide reads, in one-letter code: Phosphoglycolate phosphatase (252 aa).

Asp13 functions as the Nucleophile in the catalytic mechanism. 3 residues coordinate Mg(2+): Asp13, Asp15, and Asp192.

This sequence belongs to the HAD-like hydrolase superfamily. CbbY/CbbZ/Gph/YieH family. In terms of assembly, monomer. The cofactor is Mg(2+). Chloride is required as a cofactor.

It carries out the reaction 2-phosphoglycolate + H2O = glycolate + phosphate. The protein operates within organic acid metabolism; glycolate biosynthesis; glycolate from 2-phosphoglycolate: step 1/1. Specifically catalyzes the dephosphorylation of 2-phosphoglycolate. Is involved in the dissimilation of the intracellular 2-phosphoglycolate formed during the DNA repair of 3'-phosphoglycolate ends, a major class of DNA lesions induced by oxidative stress. The protein is Phosphoglycolate phosphatase of Salmonella typhimurium (strain LT2 / SGSC1412 / ATCC 700720).